The chain runs to 388 residues: Formate-dependent phosphoribosylglycinamide formyltransferase (388 aa).

N(1)-(5-phospho-beta-D-ribosyl)glycinamide is bound by residues 20–21 (EL) and glutamate 80. ATP is bound by residues arginine 112, lysine 153, 158–163 (SSGKGQ), 193–196 (EEFI), and glutamate 201. One can recognise an ATP-grasp domain in the interval 117-306 (RLAFEKLGLR…EFEIHARAIL (190 aa)). Mg(2+) contacts are provided by glutamate 265 and glutamate 277. Residues aspartate 284, lysine 352, and 359-360 (RR) each bind N(1)-(5-phospho-beta-D-ribosyl)glycinamide.

This sequence belongs to the PurK/PurT family. In terms of assembly, homodimer.

It carries out the reaction N(1)-(5-phospho-beta-D-ribosyl)glycinamide + formate + ATP = N(2)-formyl-N(1)-(5-phospho-beta-D-ribosyl)glycinamide + ADP + phosphate + H(+). It participates in purine metabolism; IMP biosynthesis via de novo pathway; N(2)-formyl-N(1)-(5-phospho-D-ribosyl)glycinamide from N(1)-(5-phospho-D-ribosyl)glycinamide (formate route): step 1/1. In terms of biological role, involved in the de novo purine biosynthesis. Catalyzes the transfer of formate to 5-phospho-ribosyl-glycinamide (GAR), producing 5-phospho-ribosyl-N-formylglycinamide (FGAR). Formate is provided by PurU via hydrolysis of 10-formyl-tetrahydrofolate. This is Formate-dependent phosphoribosylglycinamide formyltransferase from Methanococcus maripaludis (strain C5 / ATCC BAA-1333).